A 494-amino-acid chain; its full sequence is uncharacterized protein (494 aa).

Belongs to the TPP enzyme family.

This is an uncharacterized protein from Methanocaldococcus jannaschii (strain ATCC 43067 / DSM 2661 / JAL-1 / JCM 10045 / NBRC 100440) (Methanococcus jannaschii).